The following is a 181-amino-acid chain: TATA-box-binding protein (181 aa).

A run of 2 repeats spans residues 7–83 (IVNV…IKEL) and 98–173 (VQNM…SATL).

This sequence belongs to the TBP family.

Its function is as follows. General factor that plays a role in the activation of archaeal genes transcribed by RNA polymerase. Binds specifically to the TATA box promoter element which lies close to the position of transcription initiation. The protein is TATA-box-binding protein of Methanococcus vannielii (strain ATCC 35089 / DSM 1224 / JCM 13029 / OCM 148 / SB).